The primary structure comprises 622 residues: Telomerase-associated protein of 75 kDa (622 aa).

Component of the telomerase holoenzyme complex, composed of the catalytic core (the catalytic subunit TERT, the telomerase RNA template component TER and TAP65/p65), which is associated with two heterotrimeric subcomplexes: (i) the replication protein A (RPA)-related subcomplex, composed of TEB1, RPA2/TEB2 and RPA3/TEB3 and (ii) the CST-like subcomplex, composed of TAP75/p75, TAP45/p45 and TAP19/p19. TEB1 and the CST-like subcomplex are tethered to the catalytic core by TAP50/p50.

Its subcellular location is the chromosome. The protein localises to the telomere. In terms of biological role, component of a CST-like subcomplex of the holoenzyme telomerase ribonucleoprotein complex, which stimulates telomerase complementary-strand synthesis. Telomerase is an essential ribonucleoprotein enzyme that copies new telomeric repeats onto chromosome ends by repetitively synthesizing the short telomere-repeat sequence 5'-TTGGGG-3' using an RNA template component TER. The CST-like subcomplex (also named 7-4-1) binds telomeric single-stranded DNA and coordinates telomere G-strand and C-strand synthesis. In Tetrahymena thermophila (strain SB210), this protein is Telomerase-associated protein of 75 kDa.